The chain runs to 271 residues: 3-methyl-2-oxobutanoate hydroxymethyltransferase (271 aa).

2 residues coordinate Mg(2+): D51 and D90. Residues 51–52 (DS), D90, and K118 contribute to the 3-methyl-2-oxobutanoate site. E120 is a binding site for Mg(2+). The active-site Proton acceptor is E186.

This sequence belongs to the PanB family. As to quaternary structure, homodecamer; pentamer of dimers. Requires Mg(2+) as cofactor.

The protein resides in the cytoplasm. The enzyme catalyses 3-methyl-2-oxobutanoate + (6R)-5,10-methylene-5,6,7,8-tetrahydrofolate + H2O = 2-dehydropantoate + (6S)-5,6,7,8-tetrahydrofolate. It participates in cofactor biosynthesis; (R)-pantothenate biosynthesis; (R)-pantoate from 3-methyl-2-oxobutanoate: step 1/2. In terms of biological role, catalyzes the reversible reaction in which hydroxymethyl group from 5,10-methylenetetrahydrofolate is transferred onto alpha-ketoisovalerate to form ketopantoate. The protein is 3-methyl-2-oxobutanoate hydroxymethyltransferase of Xanthomonas campestris pv. campestris (strain 8004).